The primary structure comprises 206 residues: Ribosomal RNA large subunit methyltransferase E (206 aa).

Glycine 63, tryptophan 65, aspartate 83, aspartate 99, and aspartate 124 together coordinate S-adenosyl-L-methionine. The active-site Proton acceptor is the lysine 164.

The protein belongs to the class I-like SAM-binding methyltransferase superfamily. RNA methyltransferase RlmE family.

It is found in the cytoplasm. It carries out the reaction uridine(2552) in 23S rRNA + S-adenosyl-L-methionine = 2'-O-methyluridine(2552) in 23S rRNA + S-adenosyl-L-homocysteine + H(+). Its function is as follows. Specifically methylates the uridine in position 2552 of 23S rRNA at the 2'-O position of the ribose in the fully assembled 50S ribosomal subunit. This is Ribosomal RNA large subunit methyltransferase E from Buchnera aphidicola subsp. Schizaphis graminum (strain Sg).